The primary structure comprises 247 residues: Complement C1q subcomponent subunit B (247 aa).

Residues 1-22 (MKTPRGSVLVLLLLNLLRVSWA) form the signal peptide. Gln23 is modified (pyrrolidone carboxylic acid). 4-hydroxyproline occurs at positions 29, 32, 35, 47, and 50. Residues 30 to 78 (SIPGIPGIPGKPGSDGKPGTPGTKGEKGLPGLVSHLNENGEKGDPGFPG) form a disordered region. A Collagen-like domain is found at 39 to 98 (GKPGSDGKPGTPGTKGEKGLPGLVSHLNENGEKGDPGFPGMPGKVGPKGPIGPKGVPGPP). Low complexity predominate over residues 40 to 52 (KPGSDGKPGTPGT). A 5-hydroxylysine mark is found at Lys53 and Lys56. A 4-hydroxyproline modification is found at Pro59. Lys71 is modified (5-hydroxylysine). 4-hydroxyproline is present on residues Pro77 and Pro80. A 5-hydroxylysine mark is found at Lys86 and Lys92. A 4-hydroxyproline mark is found at Pro95 and Pro98. Lys104 is subject to 5-hydroxylysine. The C1q domain maps to 111–247 (KATQKIAFSA…GFMLFPDTEA (137 aa)). Residues Cys175 and Cys192 are joined by a disulfide bond. 3 residues coordinate Ca(2+): Asp193, Tyr194, and Gln200.

Core component of the complement C1 complex, a calcium-dependent complex composed of 1 molecule of the C1Q subcomplex, 2 molecules of C1R and 2 molecules of C1S. The C1Q subcomplex is composed 18 subunits: 3 chains of C1QA, C1QB, and C1QC trimerize to form 6 collagen-like triple helices connected to six globular ligand-recognition modules (C1q domain). Hydroxylated on lysine and proline residues. Hydroxylated lysine residues can be glycosylated. Bovine C1Q contains up to 66.3 hydroxylysine-galactosylglucose residues. Total percentage hydroxylysine residues glycosylated is 92.0%. Contains no hydroxylysine-monosaccharides.

Its subcellular location is the secreted. The protein resides in the cell surface. The C1Q subcomplex is inhibited by sulfated molecules, such as triterpenoid sulfates, heparan sulfate, or chondroitin sulfates. Its function is as follows. Core component of the complement C1 complex, a multiprotein complex that initiates the classical pathway of the complement system, a cascade of proteins that leads to phagocytosis and breakdown of pathogens and signaling that strengthens the adaptive immune system. The classical complement pathway is initiated by the C1Q subcomplex of the C1 complex, which specifically binds IgG or IgM immunoglobulins complexed with antigens, forming antigen-antibody complexes on the surface of pathogens: C1QA, together with C1QB and C1QC, specifically recognizes and binds the Fc regions of IgG or IgM via its C1q domain. Immunoglobulin-binding activates the proenzyme C1R, which cleaves C1S, initiating the proteolytic cascade of the complement system. The C1Q subcomplex is activated by a hexamer of IgG complexed with antigens, while it is activated by a pentameric IgM. The C1Q subcomplex also recognizes and binds phosphatidylserine exposed on the surface of cells undergoing programmed cell death, possibly promoting activation of the complement system. The protein is Complement C1q subcomponent subunit B (C1QB) of Bos taurus (Bovine).